Consider the following 432-residue polypeptide: Adenylosuccinate synthetase (432 aa).

Residues 13–19 (GDEGKGK) and 41–43 (GHT) each bind GTP. The active-site Proton acceptor is aspartate 14. Mg(2+)-binding residues include aspartate 14 and glycine 41. IMP is bound by residues 14 to 17 (DEGK), 39 to 42 (NAGH), threonine 130, arginine 144, glutamine 225, threonine 240, and arginine 304. Residue histidine 42 is the Proton donor of the active site. Substrate is bound at residue 300 to 306 (ATTGRRR). GTP is bound by residues arginine 306, 332–334 (KLD), and 415–417 (STG).

It belongs to the adenylosuccinate synthetase family. Homodimer. Mg(2+) serves as cofactor.

It is found in the cytoplasm. The catalysed reaction is IMP + L-aspartate + GTP = N(6)-(1,2-dicarboxyethyl)-AMP + GDP + phosphate + 2 H(+). Its pathway is purine metabolism; AMP biosynthesis via de novo pathway; AMP from IMP: step 1/2. In terms of biological role, plays an important role in the de novo pathway of purine nucleotide biosynthesis. Catalyzes the first committed step in the biosynthesis of AMP from IMP. In Erwinia tasmaniensis (strain DSM 17950 / CFBP 7177 / CIP 109463 / NCPPB 4357 / Et1/99), this protein is Adenylosuccinate synthetase.